Reading from the N-terminus, the 217-residue chain is MAWFFAPEPVMVTADEALKGGRHTVLENPAPHTVLGTPVTGPWKEGQQRIWIGLGCFWGVEQMYWQMDGVEGTSVGYAGGFTPNPTYREVCSGRTGHTEIVEVVYDPSKISLEQLVARGLEAHDPTQGFRQGNDVGTQYRSAYYTENEEGAARVKAVVDAYGETLKQHGFGEITTEIGVISPSEYFLAEDYHQQYLDKNPDGYCPHHSTGIPCGVEA.

Residue cysteine 56 is part of the active site.

It belongs to the MsrA Met sulfoxide reductase family.

The catalysed reaction is L-methionyl-[protein] + [thioredoxin]-disulfide + H2O = L-methionyl-(S)-S-oxide-[protein] + [thioredoxin]-dithiol. The enzyme catalyses [thioredoxin]-disulfide + L-methionine + H2O = L-methionine (S)-S-oxide + [thioredoxin]-dithiol. In terms of biological role, has an important function as a repair enzyme for proteins that have been inactivated by oxidation. Catalyzes the reversible oxidation-reduction of methionine sulfoxide in proteins to methionine. The protein is Peptide methionine sulfoxide reductase MsrA of Corynebacterium melassecola.